The sequence spans 450 residues: Bifunctional protein GlmU (450 aa).

The segment at Met1 to Arg221 is pyrophosphorylase. UDP-N-acetyl-alpha-D-glucosamine is bound by residues Leu6 to Gly9, Lys20, Gln69, Gly74 to Thr75, Tyr96 to Asp98, Gly135, Glu150, Asn165, and Asn219. Position 98 (Asp98) interacts with Mg(2+). Residue Asn219 participates in Mg(2+) binding. The segment at Ile222–Lys242 is linker. The segment at Gly243–Asp450 is N-acetyltransferase. Arg324 and Lys342 together coordinate UDP-N-acetyl-alpha-D-glucosamine. Residue His354 is the Proton acceptor of the active site. The UDP-N-acetyl-alpha-D-glucosamine site is built by Tyr357 and Asn368. Positions 371, 396, 414, and 431 each coordinate acetyl-CoA.

The protein in the N-terminal section; belongs to the N-acetylglucosamine-1-phosphate uridyltransferase family. This sequence in the C-terminal section; belongs to the transferase hexapeptide repeat family. Homotrimer. Mg(2+) serves as cofactor.

It localises to the cytoplasm. The enzyme catalyses alpha-D-glucosamine 1-phosphate + acetyl-CoA = N-acetyl-alpha-D-glucosamine 1-phosphate + CoA + H(+). It carries out the reaction N-acetyl-alpha-D-glucosamine 1-phosphate + UTP + H(+) = UDP-N-acetyl-alpha-D-glucosamine + diphosphate. It participates in nucleotide-sugar biosynthesis; UDP-N-acetyl-alpha-D-glucosamine biosynthesis; N-acetyl-alpha-D-glucosamine 1-phosphate from alpha-D-glucosamine 6-phosphate (route II): step 2/2. The protein operates within nucleotide-sugar biosynthesis; UDP-N-acetyl-alpha-D-glucosamine biosynthesis; UDP-N-acetyl-alpha-D-glucosamine from N-acetyl-alpha-D-glucosamine 1-phosphate: step 1/1. It functions in the pathway bacterial outer membrane biogenesis; LPS lipid A biosynthesis. In terms of biological role, catalyzes the last two sequential reactions in the de novo biosynthetic pathway for UDP-N-acetylglucosamine (UDP-GlcNAc). The C-terminal domain catalyzes the transfer of acetyl group from acetyl coenzyme A to glucosamine-1-phosphate (GlcN-1-P) to produce N-acetylglucosamine-1-phosphate (GlcNAc-1-P), which is converted into UDP-GlcNAc by the transfer of uridine 5-monophosphate (from uridine 5-triphosphate), a reaction catalyzed by the N-terminal domain. The sequence is that of Bifunctional protein GlmU from Pseudothermotoga lettingae (strain ATCC BAA-301 / DSM 14385 / NBRC 107922 / TMO) (Thermotoga lettingae).